Here is a 272-residue protein sequence, read N- to C-terminus: Shikimate dehydrogenase (NADP(+)) (272 aa).

Residues 14–16 and threonine 61 each bind shikimate; that span reads SLS. Residue lysine 65 is the Proton acceptor of the active site. Residue aspartate 102 participates in shikimate binding. Residues 127–131, 151–156, and leucine 215 contribute to the NADP(+) site; these read GAGGA and NRTPSK. Residue tyrosine 217 coordinates shikimate. Glycine 239 provides a ligand contact to NADP(+).

This sequence belongs to the shikimate dehydrogenase family. As to quaternary structure, homodimer.

It catalyses the reaction shikimate + NADP(+) = 3-dehydroshikimate + NADPH + H(+). It functions in the pathway metabolic intermediate biosynthesis; chorismate biosynthesis; chorismate from D-erythrose 4-phosphate and phosphoenolpyruvate: step 4/7. Functionally, involved in the biosynthesis of the chorismate, which leads to the biosynthesis of aromatic amino acids. Catalyzes the reversible NADPH linked reduction of 3-dehydroshikimate (DHSA) to yield shikimate (SA). This is Shikimate dehydrogenase (NADP(+)) from Coxiella burnetii (strain CbuG_Q212) (Coxiella burnetii (strain Q212)).